The sequence spans 194 residues: MTVGLFGGSFNPPHGGHALVAEIAIRRLKLDQLWWMVTPGNPLKDSRELAPLSERLRLSEEVAEDPRIKVTALEAAFHVRYTADTLALIRNANPDVYFVWVMGADNLASFHRWQRWREIAQNFPIAIIDRPGSTLSYLSSRMAQTFSDSRLDERYAPVLARRMPPAWTFIHGPRSSLSSTALRKVQLKKAPSKK.

This sequence belongs to the NadD family.

The catalysed reaction is nicotinate beta-D-ribonucleotide + ATP + H(+) = deamido-NAD(+) + diphosphate. It participates in cofactor biosynthesis; NAD(+) biosynthesis; deamido-NAD(+) from nicotinate D-ribonucleotide: step 1/1. In terms of biological role, catalyzes the reversible adenylation of nicotinate mononucleotide (NaMN) to nicotinic acid adenine dinucleotide (NaAD). The protein is Probable nicotinate-nucleotide adenylyltransferase of Brucella abortus (strain 2308).